The primary structure comprises 242 residues: Uridylate kinase (242 aa).

17–20 is an ATP binding site; it reads KLGG. UMP is bound at residue Gly-58. 2 residues coordinate ATP: Gly-59 and Arg-63. Residues Asp-78 and 139–146 contribute to the UMP site; that span reads MGMPYFST. Residues Phe-172 and Asp-175 each coordinate ATP.

This sequence belongs to the UMP kinase family. Homohexamer.

It is found in the cytoplasm. It carries out the reaction UMP + ATP = UDP + ADP. It participates in pyrimidine metabolism; CTP biosynthesis via de novo pathway; UDP from UMP (UMPK route): step 1/1. Its activity is regulated as follows. Inhibited by UTP. Catalyzes the reversible phosphorylation of UMP to UDP. In Rhodococcus jostii (strain RHA1), this protein is Uridylate kinase.